A 456-amino-acid polypeptide reads, in one-letter code: Bifunctional protein GlmU (456 aa).

The interval 1-229 (MSNSSMSVVI…LSEVEGVNNR (229 aa)) is pyrophosphorylase. UDP-N-acetyl-alpha-D-glucosamine contacts are provided by residues 11–14 (LAAG), lysine 25, glutamine 76, 81–82 (GT), 103–105 (YGD), glycine 140, glutamate 154, asparagine 169, and asparagine 227. Aspartate 105 is a binding site for Mg(2+). Asparagine 227 contributes to the Mg(2+) binding site. The linker stretch occupies residues 230–250 (LQLSALERVFQTEQAEKLLLA). Positions 251-456 (GVMLLDPSRF…QGWKRPVKKK (206 aa)) are N-acetyltransferase. The UDP-N-acetyl-alpha-D-glucosamine site is built by arginine 333 and lysine 351. Histidine 363 acts as the Proton acceptor in catalysis. Tyrosine 366 and asparagine 377 together coordinate UDP-N-acetyl-alpha-D-glucosamine. Acetyl-CoA-binding positions include alanine 380, 386 to 387 (NY), serine 405, alanine 423, and arginine 440.

It in the N-terminal section; belongs to the N-acetylglucosamine-1-phosphate uridyltransferase family. This sequence in the C-terminal section; belongs to the transferase hexapeptide repeat family. As to quaternary structure, homotrimer. Mg(2+) serves as cofactor.

The protein resides in the cytoplasm. The enzyme catalyses alpha-D-glucosamine 1-phosphate + acetyl-CoA = N-acetyl-alpha-D-glucosamine 1-phosphate + CoA + H(+). The catalysed reaction is N-acetyl-alpha-D-glucosamine 1-phosphate + UTP + H(+) = UDP-N-acetyl-alpha-D-glucosamine + diphosphate. It participates in nucleotide-sugar biosynthesis; UDP-N-acetyl-alpha-D-glucosamine biosynthesis; N-acetyl-alpha-D-glucosamine 1-phosphate from alpha-D-glucosamine 6-phosphate (route II): step 2/2. It functions in the pathway nucleotide-sugar biosynthesis; UDP-N-acetyl-alpha-D-glucosamine biosynthesis; UDP-N-acetyl-alpha-D-glucosamine from N-acetyl-alpha-D-glucosamine 1-phosphate: step 1/1. The protein operates within bacterial outer membrane biogenesis; LPS lipid A biosynthesis. Functionally, catalyzes the last two sequential reactions in the de novo biosynthetic pathway for UDP-N-acetylglucosamine (UDP-GlcNAc). The C-terminal domain catalyzes the transfer of acetyl group from acetyl coenzyme A to glucosamine-1-phosphate (GlcN-1-P) to produce N-acetylglucosamine-1-phosphate (GlcNAc-1-P), which is converted into UDP-GlcNAc by the transfer of uridine 5-monophosphate (from uridine 5-triphosphate), a reaction catalyzed by the N-terminal domain. In Yersinia pseudotuberculosis serotype O:1b (strain IP 31758), this protein is Bifunctional protein GlmU.